Consider the following 256-residue polypeptide: 5-oxoprolinase subunit A (256 aa).

The protein belongs to the LamB/PxpA family. As to quaternary structure, forms a complex composed of PxpA, PxpB and PxpC.

It catalyses the reaction 5-oxo-L-proline + ATP + 2 H2O = L-glutamate + ADP + phosphate + H(+). Its function is as follows. Catalyzes the cleavage of 5-oxoproline to form L-glutamate coupled to the hydrolysis of ATP to ADP and inorganic phosphate. The sequence is that of 5-oxoprolinase subunit A from Cutibacterium acnes (strain DSM 16379 / KPA171202) (Propionibacterium acnes).